We begin with the raw amino-acid sequence, 111 residues long: MLSASCSGLVILLIFRRTSGDSVTQTEGPVTLPERAALTLNCTYQSSYSTFLFWYVQYLNKEPELLLKSSENQETDSRGFQASPIKSDSSFHLEKPSVQLSDSAVYYCALR.

Residues 1–20 (MLSASCSGLVILLIFRRTSG) form the signal peptide. The region spanning 21-111 (DSVTQTEGPV…DSAVYYCALR (91 aa)) is the Ig-like domain. Asn-41 is a glycosylation site (N-linked (GlcNAc...) asparagine). A disulfide bridge connects residues Cys-42 and Cys-108.

Alpha-beta TR is a heterodimer composed of an alpha and beta chain; disulfide-linked. The alpha-beta TR is associated with the transmembrane signaling CD3 coreceptor proteins to form the TR-CD3 (TcR or TCR). The assembly of alpha-beta TR heterodimers with CD3 occurs in the endoplasmic reticulum where a single alpha-beta TR heterodimer associates with one CD3D-CD3E heterodimer, one CD3G-CD3E heterodimer and one CD247 homodimer forming a stable octameric structure. CD3D-CD3E and CD3G-CD3E heterodimers preferentially associate with TR alpha and TR beta chains, respectively. The association of the CD247 homodimer is the last step of TcR assembly in the endoplasmic reticulum and is required for transport to the cell surface.

It localises to the cell membrane. Its function is as follows. V region of the variable domain of T cell receptor (TR) alpha chain that participates in the antigen recognition. Alpha-beta T cell receptors are antigen specific receptors which are essential to the immune response and are present on the cell surface of T lymphocytes. Recognize peptide-major histocompatibility (MH) (pMH) complexes that are displayed by antigen presenting cells (APC), a prerequisite for efficient T cell adaptive immunity against pathogens. Binding of alpha-beta TR to pMH complex initiates TR-CD3 clustering on the cell surface and intracellular activation of LCK that phosphorylates the ITAM motifs of CD3G, CD3D, CD3E and CD247 enabling the recruitment of ZAP70. In turn ZAP70 phosphorylates LAT, which recruits numerous signaling molecules to form the LAT signalosome. The LAT signalosome propagates signal branching to three major signaling pathways, the calcium, the mitogen-activated protein kinase (MAPK) kinase and the nuclear factor NF-kappa-B (NF-kB) pathways, leading to the mobilization of transcription factors that are critical for gene expression and essential for T cell growth and differentiation. The T cell repertoire is generated in the thymus, by V-(D)-J rearrangement. This repertoire is then shaped by intrathymic selection events to generate a peripheral T cell pool of self-MH restricted, non-autoaggressive T cells. Post-thymic interaction of alpha-beta TR with the pMH complexes shapes TR structural and functional avidity. This chain is T cell receptor alpha variable 18, found in Homo sapiens (Human).